Reading from the N-terminus, the 431-residue chain is Translation initiation factor 2 subunit gamma (431 aa).

Residues 26–223 (QPCVNIGMVG…ALETQIPTPS (198 aa)) enclose the tr-type G domain. Positions 35 to 42 (GHVDHGKT) are G1. Positions 38, 42, 63, and 65 each coordinate Mg(2+). A GTP-binding site is contributed by 38–43 (DHGKTT). The tract at residues 63–67 (GISIR) is G2. Residues Cys78, Cys81, Cys93, and Cys96 each contribute to the Zn(2+) site. Residues 110–113 (DAPG) form a G3 region. GTP contacts are provided by residues 166–169 (NKID) and 201–203 (SAQ). A G4 region spans residues 166-169 (NKID). The G5 stretch occupies residues 201–203 (SAQ).

Belongs to the TRAFAC class translation factor GTPase superfamily. Classic translation factor GTPase family. EIF2G subfamily. As to quaternary structure, heterotrimer composed of an alpha, a beta and a gamma chain. Mg(2+) is required as a cofactor.

It catalyses the reaction GTP + H2O = GDP + phosphate + H(+). In terms of biological role, eIF-2 functions in the early steps of protein synthesis by forming a ternary complex with GTP and initiator tRNA. The protein is Translation initiation factor 2 subunit gamma of Methanosarcina mazei (strain ATCC BAA-159 / DSM 3647 / Goe1 / Go1 / JCM 11833 / OCM 88) (Methanosarcina frisia).